Here is a 446-residue protein sequence, read N- to C-terminus: Packaging protein 1 (446 aa).

Residues 1–71 (MEEKAGLGRL…QPQASKPKKH (71 aa)) are disordered. Residues 31-43 (FHSDRNHPNKEAE) show a composition bias toward basic and acidic residues. 170-177 (GPTGCGKS) serves as a coordination point for ATP. Positions 439–446 (RYYHSKKK) are DNA-binding.

The protein belongs to the adenoviridae packaging protein 1 family. As to quaternary structure, homodimer. Part of a genome packaging complex composed of packaging proteins 1, 2 and 3; this complex specifically binds to the packaging sequence on the left end of viral genomic DNA and performs packaging of the viral genome. Interacts with protein 33K.

It is found in the virion. The protein resides in the host nucleus. The protein localises to the host nucleoplasm. Its subcellular location is the host nucleolus. In terms of biological role, component of the packaging machinery which encapsidates the viral DNA into preformed capsids and transcriptional activator of the viral major late promoter (MLP). Binds, along with packaging proteins 2 and 3, to the specific packaging sequence on the left end of viral genomic DNA and displays ATPase activity thereby providing the power stroke of the packaging machinery. The activity of packaging protein IVa2 is stimulated by protein 33K which acts as a terminase. May be the protein that pumps DNA into the capsid powered by ATP hydrolysis. Specifically binds to the 5'-CG-3' nucleotides of the repeats making up the packaging sequence. Component of the DEF-A and DEF-B transcription factors that bind downstream elements of the major late promoter (MLP), and stimulate transcription from the MLP after initiation of viral DNA replication. DEF-A is a heterodimer packaging proteins 1 and 2 and DEF-B is a homodimer of packaging protein 1. This chain is Packaging protein 1, found in Canine adenovirus serotype 2 (strain Toronto A 26-61) (CAdV-2).